The sequence spans 333 residues: Ketol-acid reductoisomerase (NADP(+)) (333 aa).

The KARI N-terminal Rossmann domain maps to 2 to 182 (AELFYDDDAD…GGTRAGVIKT (181 aa)). NADP(+)-binding positions include 25-28 (YGSQ), serine 51, serine 53, and 83-86 (DPIQ). Histidine 108 is an active-site residue. NADP(+) is bound at residue glycine 134. The KARI C-terminal knotted domain maps to 183–328 (TFTEETETDL…RELRKLMSWV (146 aa)). Mg(2+)-binding residues include aspartate 191, glutamate 195, glutamate 227, and glutamate 231. Serine 252 lines the substrate pocket.

The protein belongs to the ketol-acid reductoisomerase family. Requires Mg(2+) as cofactor.

The catalysed reaction is (2R)-2,3-dihydroxy-3-methylbutanoate + NADP(+) = (2S)-2-acetolactate + NADPH + H(+). The enzyme catalyses (2R,3R)-2,3-dihydroxy-3-methylpentanoate + NADP(+) = (S)-2-ethyl-2-hydroxy-3-oxobutanoate + NADPH + H(+). Its pathway is amino-acid biosynthesis; L-isoleucine biosynthesis; L-isoleucine from 2-oxobutanoate: step 2/4. It participates in amino-acid biosynthesis; L-valine biosynthesis; L-valine from pyruvate: step 2/4. In terms of biological role, involved in the biosynthesis of branched-chain amino acids (BCAA). Catalyzes an alkyl-migration followed by a ketol-acid reduction of (S)-2-acetolactate (S2AL) to yield (R)-2,3-dihydroxy-isovalerate. In the isomerase reaction, S2AL is rearranged via a Mg-dependent methyl migration to produce 3-hydroxy-3-methyl-2-ketobutyrate (HMKB). In the reductase reaction, this 2-ketoacid undergoes a metal-dependent reduction by NADPH to yield (R)-2,3-dihydroxy-isovalerate. In Streptomyces griseus subsp. griseus (strain JCM 4626 / CBS 651.72 / NBRC 13350 / KCC S-0626 / ISP 5235), this protein is Ketol-acid reductoisomerase (NADP(+)).